The sequence spans 520 residues: Tubby-related protein 2 (520 aa).

Phosphoserine occurs at positions 135 and 190. Positions Glu141–Glu236 are disordered. Residues Gln211–Ser223 show a composition bias toward basic and acidic residues. Residues Glu224–Ala233 show a composition bias toward polar residues.

This sequence belongs to the TUB family. As to expression, strongly expressed in testis. Also expressed in retina. Expressed in cancer cell lines.

Its subcellular location is the cytoplasm. It localises to the secreted. The chain is Tubby-related protein 2 (TULP2) from Homo sapiens (Human).